The following is a 227-amino-acid chain: Cytochrome c oxidase subunit 2 (227 aa).

Residues 1 to 14 (MAHPVQLGLQDATS) lie on the Mitochondrial intermembrane side of the membrane. The helical transmembrane segment at 15–45 (PVMEELITFHDHALMAMSLISLLVLYALFST) threads the bilayer. At 46–59 (LTTKLTNTNITDAQ) the chain is on the mitochondrial matrix side. A helical transmembrane segment spans residues 60 to 87 (EMEIIWTILPAIILVLIALPSLRILYLT). Residues 88–227 (DEVNNPSFTI…IFEMGPVFTL (140 aa)) are Mitochondrial intermembrane-facing. His-161, Cys-196, Glu-198, Cys-200, His-204, and Met-207 together coordinate Cu cation. Glu-198 provides a ligand contact to Mg(2+).

This sequence belongs to the cytochrome c oxidase subunit 2 family. Component of the cytochrome c oxidase (complex IV, CIV), a multisubunit enzyme composed of 14 subunits. The complex is composed of a catalytic core of 3 subunits MT-CO1, MT-CO2 and MT-CO3, encoded in the mitochondrial DNA, and 11 supernumerary subunits COX4I, COX5A, COX5B, COX6A, COX6B, COX6C, COX7A, COX7B, COX7C, COX8 and NDUFA4, which are encoded in the nuclear genome. The complex exists as a monomer or a dimer and forms supercomplexes (SCs) in the inner mitochondrial membrane with NADH-ubiquinone oxidoreductase (complex I, CI) and ubiquinol-cytochrome c oxidoreductase (cytochrome b-c1 complex, complex III, CIII), resulting in different assemblies (supercomplex SCI(1)III(2)IV(1) and megacomplex MCI(2)III(2)IV(2)). Found in a complex with TMEM177, COA6, COX18, COX20, SCO1 and SCO2. Interacts with TMEM177 in a COX20-dependent manner. Interacts with COX20. Interacts with COX16. The cofactor is Cu cation.

The protein localises to the mitochondrion inner membrane. It catalyses the reaction 4 Fe(II)-[cytochrome c] + O2 + 8 H(+)(in) = 4 Fe(III)-[cytochrome c] + 2 H2O + 4 H(+)(out). In terms of biological role, component of the cytochrome c oxidase, the last enzyme in the mitochondrial electron transport chain which drives oxidative phosphorylation. The respiratory chain contains 3 multisubunit complexes succinate dehydrogenase (complex II, CII), ubiquinol-cytochrome c oxidoreductase (cytochrome b-c1 complex, complex III, CIII) and cytochrome c oxidase (complex IV, CIV), that cooperate to transfer electrons derived from NADH and succinate to molecular oxygen, creating an electrochemical gradient over the inner membrane that drives transmembrane transport and the ATP synthase. Cytochrome c oxidase is the component of the respiratory chain that catalyzes the reduction of oxygen to water. Electrons originating from reduced cytochrome c in the intermembrane space (IMS) are transferred via the dinuclear copper A center (CU(A)) of subunit 2 and heme A of subunit 1 to the active site in subunit 1, a binuclear center (BNC) formed by heme A3 and copper B (CU(B)). The BNC reduces molecular oxygen to 2 water molecules using 4 electrons from cytochrome c in the IMS and 4 protons from the mitochondrial matrix. The polypeptide is Cytochrome c oxidase subunit 2 (MT-CO2) (Cercocebus galeritus (Tana river mangabey)).